The sequence spans 339 residues: Senescence-specific cysteine protease SAG39 (339 aa).

The N-terminal stretch at 1-23 (MAMAKALLFAILGCLCLCSAVLA) is a signal peptide. 3 cysteine pairs are disulfide-bonded: Cys144–Cys187, Cys178–Cys220, and Cys276–Cys328. Residue Cys147 is part of the active site. Active-site residues include His282 and Asn303.

This sequence belongs to the peptidase C1 family. In terms of tissue distribution, low expression in mature leaves.

It localises to the vacuole. Cysteine protease that may have a developmental senescence specific cell death function during apoptosis, heavy metal detoxification, and hypersensitive response. The polypeptide is Senescence-specific cysteine protease SAG39 (Oryza sativa subsp. japonica (Rice)).